We begin with the raw amino-acid sequence, 103 residues long: MEIKEISTAALKEKIEADEELYLIDVREDEEVAEGMIPQAVHIRMGDIPEKMETLDKDKEYVFICRSGMRSMNVCKYLDEQGFKTVNVEGGMMAWEGETKPKN.

Residues 17–100 (ADEELYLIDV…GMMAWEGETK (84 aa)) enclose the Rhodanese domain. Residue Cys-65 is the Cysteine persulfide intermediate of the active site.

This is Putative sulfurtransferase YtwF (ytwF) from Bacillus subtilis (strain 168).